Here is a 257-residue protein sequence, read N- to C-terminus: Alkaline phosphatase synthesis transcriptional regulatory protein SphR (257 aa).

One can recognise a Response regulatory domain in the interval 25 to 148; that stretch reads RILVVEDEAV…ELVARCRALL (124 aa). Aspartate 83 carries the post-translational modification 4-aspartylphosphate. The ompR/PhoB-type DNA-binding region spans 159–257; that stretch reads PAVLRYEGLK…TVRGFGYRLG (99 aa).

Post-translationally, phosphorylated by SphS.

Its function is as follows. Member of the two-component regulatory system SphR/SphS. Response regulator. Involved in inducible production of alkaline phosphatase in response to phosphate limitation as it is directly involved in the regulation of phoA transcription in response to phosphate limitation. Binds to two distinct sites upstream from the phoA promoter. In Synechococcus elongatus (strain ATCC 33912 / PCC 7942 / FACHB-805) (Anacystis nidulans R2), this protein is Alkaline phosphatase synthesis transcriptional regulatory protein SphR (sphR).